A 129-amino-acid polypeptide reads, in one-letter code: Sm-like protein LSM4 (129 aa).

One can recognise a Sm domain in the interval 2–75; it reads LPLSLLKTAQ…IKYLRVPDEV (74 aa). The segment covering 79–90 has biased composition (basic and acidic residues); that stretch reads VQEEKTRTDRKP. Residues 79 to 129 are disordered; sequence VQEEKTRTDRKPPGVGRGRGRGVDDGGARGRGRGTSMGKMGGNRGAGRGRG. The segment covering 111–129 has biased composition (gly residues); sequence RGTSMGKMGGNRGAGRGRG.

It belongs to the snRNP Sm proteins family. Component of the heptameric LSM1-LSM7 complex that forms a seven-membered ring structure with a donut shape. The LSM subunits are arranged in the order LSM1, LSM2, LSM3, LSM6, LSM5, LSM7 and LSM4. LSM4 subunit interacts only with its two neighboring subunits, LSM1A or LSM1B and LSM7. Component of the heptameric LSM2-LSM8 complex that forms a seven-membered ring structure with a donut shape. The LSM subunits are arranged in the order LSM8, LSM2, LSM3, LSM6, LSM5, LSM7 and LSM4. LSM4 subunit interacts only with its two neighboring subunits, LSM8 and LSM7. Methylated by PMRT15/SKB1 in response to salt stress or abscisic acid (ABA) treatment. As to expression, expressed in roots, leaves, stems, flowers and siliques.

It is found in the cytoplasm. The protein localises to the nucleus. Component of LSM protein complexes, which are involved in RNA processing. Component of the cytoplasmic LSM1-LSM7 complex which is involved in mRNA degradation by promoting decapping and leading to accurate 5'-3' mRNA decay. The cytoplasmic LSM1-LSM7 complex regulates developmental gene expression by the decapping of specific development-related transcripts. Component of the nuclear LSM2-LSM8 complex which is involved splicing nuclear mRNAs. LSM2-LSM8 binds directly to the U6 small nuclear RNAs (snRNAs) and is essential for accurate splicing of selected development-related mRNAs through the stabilization of the spliceosomal U6 snRNA. Plays a critical role in the regulation of development-related gene expression. The polypeptide is Sm-like protein LSM4 (Arabidopsis thaliana (Mouse-ear cress)).